A 450-amino-acid polypeptide reads, in one-letter code: Sulfide:quinone oxidoreductase, mitochondrial (450 aa).

Residues 53–54 (SG), Glu75, Gln83, and Val118 contribute to the FAD site. Lys173 carries the N6-acetyllysine modification. Cys201 acts as the Cysteine persulfide intermediate in catalysis. Residues Cys201 and Cys379 are joined by a disulfide bond. Asp336 lines the FAD pocket. Ser343 bears the Phosphoserine mark. 344 to 347 (KTAA) contacts FAD. The active-site Cysteine persulfide intermediate is the Cys379.

This sequence belongs to the SQRD family. FAD is required as a cofactor.

The protein localises to the mitochondrion. The enzyme catalyses ubiquinone-10 + hydrogen sulfide + sulfite + 2 H(+) = ubiquinol-10 + thiosulfate. The catalysed reaction is a quinone + hydrogen sulfide + glutathione + H(+) = S-sulfanylglutathione + a quinol. It catalyses the reaction ubiquinone-10 + hydrogen sulfide + glutathione + H(+) = S-sulfanylglutathione + ubiquinol-10. Its function is as follows. Catalyzes the oxidation of hydrogen sulfide with the help of a quinone, such as ubiquinone-10, giving rise to thiosulfate and ultimately to sulfane (molecular sulfur) atoms. Requires an additional electron acceptor; can use sulfite, sulfide or cyanide (in vitro). It is believed the in vivo electron acceptor is glutathione. This is Sulfide:quinone oxidoreductase, mitochondrial from Homo sapiens (Human).